The chain runs to 393 residues: Thermostable carboxypeptidase 2 (393 aa).

3 residues coordinate Zn(2+): H104, D109, and H245. Y302 functions as the Proton donor in the catalytic mechanism. The active-site Nucleophile is the E373.

The protein belongs to the peptidase M20 family. Homotetramer. Requires Zn(2+) as cofactor.

In terms of biological role, can release basic, acidic, aromatic, and, to a lesser extent, aliphatic amino acids. The protein is Thermostable carboxypeptidase 2 (cpsA2) of Saccharolobus solfataricus (strain ATCC 35092 / DSM 1617 / JCM 11322 / P2) (Sulfolobus solfataricus).